Here is a 165-residue protein sequence, read N- to C-terminus: Large ribosomal subunit protein uL10 (165 aa).

Belongs to the universal ribosomal protein uL10 family. In terms of assembly, part of the ribosomal stalk of the 50S ribosomal subunit. The N-terminus interacts with L11 and the large rRNA to form the base of the stalk. The C-terminus forms an elongated spine to which L12 dimers bind in a sequential fashion forming a multimeric L10(L12)X complex.

In terms of biological role, forms part of the ribosomal stalk, playing a central role in the interaction of the ribosome with GTP-bound translation factors. The sequence is that of Large ribosomal subunit protein uL10 from Cronobacter sakazakii (strain ATCC BAA-894) (Enterobacter sakazakii).